The following is a 70-amino-acid chain: MIYKVYYQETKIRNPKREDTKSLYMEADSDVIVRQLVEENTPYNIEYVQLLDEKHLAYEQEHADFTLTEF.

Belongs to the RNA polymerase subunit epsilon family. RNAP is composed of a core of 2 alpha, a beta and a beta' subunit. The core is associated with a delta subunit, and at least one of epsilon or omega. When a sigma factor is associated with the core the holoenzyme is formed, which can initiate transcription.

It carries out the reaction RNA(n) + a ribonucleoside 5'-triphosphate = RNA(n+1) + diphosphate. Functionally, a non-essential component of RNA polymerase (RNAP). In Enterococcus faecalis (strain ATCC 700802 / V583), this protein is DNA-directed RNA polymerase subunit epsilon.